The following is a 79-amino-acid chain: Serine protease inhibitor Kazal-type 1-like (79 aa).

An N-terminal signal peptide occupies residues 1 to 23; sequence MKVAIIFLLSALALLNLAGNTTA. The 54-residue stretch at 26 to 79 folds into the Kazal-like domain; that stretch reads IGKKANCPNTLVGCPRDYDPVCGTDGKTYANECILCFENRKFGTSIRIQRRGLC. Intrachain disulfides connect cysteine 32–cysteine 61, cysteine 39–cysteine 58, and cysteine 47–cysteine 79.

As to expression, seminal vesicle.

The protein localises to the secreted. Functionally, serine protease inhibitor which exhibits anti-trypsin activity. In the pancreas, protects against trypsin-catalyzed premature activation of zymogens. In the male reproductive tract, binds to sperm heads where it modulates sperm capacitance by inhibiting calcium uptake and nitrogen oxide (NO) production. The polypeptide is Serine protease inhibitor Kazal-type 1-like (Rattus norvegicus (Rat)).